Consider the following 188-residue polypeptide: Cell division protein ZapC (188 aa).

Belongs to the ZapC family. In terms of assembly, interacts directly with FtsZ.

It is found in the cytoplasm. Functionally, contributes to the efficiency of the cell division process by stabilizing the polymeric form of the cell division protein FtsZ. Acts by promoting interactions between FtsZ protofilaments and suppressing the GTPase activity of FtsZ. This is Cell division protein ZapC from Psychromonas ingrahamii (strain DSM 17664 / CCUG 51855 / 37).